A 1303-amino-acid polypeptide reads, in one-letter code: DNA-directed RNA polymerase subunit beta' (1303 aa).

Residues C60, C62, C75, and C78 each contribute to the Zn(2+) site. Mg(2+) is bound by residues D535, D537, and D539. Zn(2+) is bound by residues C876, C953, C960, and C963.

This sequence belongs to the RNA polymerase beta' chain family. In terms of assembly, the RNAP catalytic core consists of 2 alpha, 1 beta, 1 beta' and 1 omega subunit. When a sigma factor is associated with the core the holoenzyme is formed, which can initiate transcription. It depends on Mg(2+) as a cofactor. Zn(2+) serves as cofactor.

It carries out the reaction RNA(n) + a ribonucleoside 5'-triphosphate = RNA(n+1) + diphosphate. Its function is as follows. DNA-dependent RNA polymerase catalyzes the transcription of DNA into RNA using the four ribonucleoside triphosphates as substrates. The polypeptide is DNA-directed RNA polymerase subunit beta' (Saccharopolyspora erythraea (strain ATCC 11635 / DSM 40517 / JCM 4748 / NBRC 13426 / NCIMB 8594 / NRRL 2338)).